Reading from the N-terminus, the 348-residue chain is Oxidase ucsJ (348 aa).

This sequence belongs to the avfA family.

Its pathway is mycotoxin biosynthesis. Functionally, oxidase; part of the gene cluster that mediates the biosynthesis of UCS1025A, a member of the pyrrolizidinone family that acts as a strong telomerase inhibitor and displays potent antibacterial and antitumor properties. These compounds share a hemiaminal-containing pyrrolizidinone core fused with a gamma-lactone, giving a furopyrrolizidine that is connected to a decalin fragment. The polyketide synthase module (PKS) of the PKS-NRPS ucsA is responsible for the synthesis of the polyketide backbone via the condensation of an acetyl-CoA starter unit with 6 malonyl-CoA units. The downstream nonribosomal peptide synthetase (NRPS) module then amidates the carboxyl end of the polyketide with a 2S,3S-methylproline derived from L-isoleucine by the 2-oxoglutarate-dependent dioxygenase ucsF which converts L-isoleucine to (4S,5S)-4-methylpyrroline-5-carboxylate that is further converted to 2S,3S-methylproline by the pyrroline-5-carboxylate reductase ucsG. Reductive release of the completed aminoacyl polyketide from the assembly line can form the 3-pyrrolin-2-one structure via an intramolecular Knoevenagel reaction. Because ucsA lacks a designated enoylreductase (ER) domain, the required activity is provided the enoyl reductase ucsL. This keto acyclic precursor is the substrate of the Diels-Alderase ucsH, that catalyzes the Diels-Alder cycloaddition. Oxidation of the 3S-methyl group to a carboxylate by the cytochrome P450 monooxygenase ucsK allows an oxa-Michael cyclization that might involve the reductase/dehydrogenase ucsI and which furnishes the furopyrrolizidine. The oxidase ucsJ likely plays a critical role in stereoselective reduction of the C5-C6 double bond to afford the required R-configured carboxylate group. Further enolization and oxidation at C5 by an unidentified enzyme affords the last intermediate that can undergo oxa-Michael cyclization to yield UCS1025A. The chain is Oxidase ucsJ from Acremonium sp.